We begin with the raw amino-acid sequence, 797 residues long: Xaa-Pro dipeptidyl-peptidase (797 aa).

Catalysis depends on charge relay system residues serine 370, aspartate 490, and histidine 521.

This sequence belongs to the peptidase S15 family. In terms of assembly, homodimer.

The protein localises to the cytoplasm. The enzyme catalyses Hydrolyzes Xaa-Pro-|- bonds to release unblocked, N-terminal dipeptides from substrates including Ala-Pro-|-p-nitroanilide and (sequentially) Tyr-Pro-|-Phe-Pro-|-Gly-Pro-|-Ile.. Its function is as follows. Removes N-terminal dipeptides sequentially from polypeptides having unsubstituted N-termini provided that the penultimate residue is proline. In Lacticaseibacillus paracasei (strain ATCC 334 / BCRC 17002 / CCUG 31169 / CIP 107868 / KCTC 3260 / NRRL B-441) (Lactobacillus paracasei), this protein is Xaa-Pro dipeptidyl-peptidase.